The primary structure comprises 381 residues: Queuine tRNA-ribosyltransferase (381 aa).

The active-site Proton acceptor is the D103. Residues 103–107 (DSGGF), D157, Q200, and G227 each bind substrate. Residues 258 to 264 (GVGTYRE) form an RNA binding region. Catalysis depends on D277, which acts as the Nucleophile. The tract at residues 282–286 (TRLAR) is RNA binding; important for wobble base 34 recognition. 4 residues coordinate Zn(2+): C315, C317, C320, and H346.

This sequence belongs to the queuine tRNA-ribosyltransferase family. As to quaternary structure, homodimer. Within each dimer, one monomer is responsible for RNA recognition and catalysis, while the other monomer binds to the replacement base PreQ1. It depends on Zn(2+) as a cofactor.

It catalyses the reaction 7-aminomethyl-7-carbaguanine + guanosine(34) in tRNA = 7-aminomethyl-7-carbaguanosine(34) in tRNA + guanine. It functions in the pathway tRNA modification; tRNA-queuosine biosynthesis. Functionally, catalyzes the base-exchange of a guanine (G) residue with the queuine precursor 7-aminomethyl-7-deazaguanine (PreQ1) at position 34 (anticodon wobble position) in tRNAs with GU(N) anticodons (tRNA-Asp, -Asn, -His and -Tyr). Catalysis occurs through a double-displacement mechanism. The nucleophile active site attacks the C1' of nucleotide 34 to detach the guanine base from the RNA, forming a covalent enzyme-RNA intermediate. The proton acceptor active site deprotonates the incoming PreQ1, allowing a nucleophilic attack on the C1' of the ribose to form the product. After dissociation, two additional enzymatic reactions on the tRNA convert PreQ1 to queuine (Q), resulting in the hypermodified nucleoside queuosine (7-(((4,5-cis-dihydroxy-2-cyclopenten-1-yl)amino)methyl)-7-deazaguanosine). This is Queuine tRNA-ribosyltransferase from Cyanothece sp. (strain PCC 7425 / ATCC 29141).